The chain runs to 839 residues: Probable beta-glucosidase I (839 aa).

An N-linked (GlcNAc...) asparagine glycan is attached at Asn-197. Residue Asp-225 is part of the active site. In terms of domain architecture, PA14 spans 395–555; that stretch reads DGKTGFSFKV…GQEELISNAV (161 aa). A glycan (N-linked (GlcNAc...) asparagine) is linked at Asn-620.

Belongs to the glycosyl hydrolase 3 family.

Its subcellular location is the secreted. The enzyme catalyses Hydrolysis of terminal, non-reducing beta-D-glucosyl residues with release of beta-D-glucose.. It participates in glycan metabolism; cellulose degradation. Beta-glucosidases are one of a number of cellulolytic enzymes involved in the degradation of cellulosic biomass. Catalyzes the last step releasing glucose from the inhibitory cellobiose. This Aspergillus flavus (strain ATCC 200026 / FGSC A1120 / IAM 13836 / NRRL 3357 / JCM 12722 / SRRC 167) protein is Probable beta-glucosidase I (bglI).